The primary structure comprises 347 residues: Holliday junction branch migration complex subunit RuvB (347 aa).

The interval 1-182 is large ATPase domain (RuvB-L); it reads MSAQNPVLTP…FGIPVRLSFY (182 aa). ATP is bound by residues Leu21, Arg22, Gly63, Lys66, Thr67, Thr68, 129–131, Arg172, Tyr182, and Arg219; that span reads EDF. A Mg(2+)-binding site is contributed by Thr67. A small ATPAse domain (RuvB-S) region spans residues 183-253; that stretch reads TVEELELIVR…IADEALTRLL (71 aa). The tract at residues 256–347 is head domain (RuvB-H); the sequence is NMGLDQLDTR…QFRLTLEDDD (92 aa). DNA contacts are provided by Arg292, Arg311, and Arg316.

This sequence belongs to the RuvB family. In terms of assembly, homohexamer. Forms an RuvA(8)-RuvB(12)-Holliday junction (HJ) complex. HJ DNA is sandwiched between 2 RuvA tetramers; dsDNA enters through RuvA and exits via RuvB. An RuvB hexamer assembles on each DNA strand where it exits the tetramer. Each RuvB hexamer is contacted by two RuvA subunits (via domain III) on 2 adjacent RuvB subunits; this complex drives branch migration. In the full resolvosome a probable DNA-RuvA(4)-RuvB(12)-RuvC(2) complex forms which resolves the HJ.

Its subcellular location is the cytoplasm. The catalysed reaction is ATP + H2O = ADP + phosphate + H(+). The RuvA-RuvB-RuvC complex processes Holliday junction (HJ) DNA during genetic recombination and DNA repair, while the RuvA-RuvB complex plays an important role in the rescue of blocked DNA replication forks via replication fork reversal (RFR). RuvA specifically binds to HJ cruciform DNA, conferring on it an open structure. The RuvB hexamer acts as an ATP-dependent pump, pulling dsDNA into and through the RuvAB complex. RuvB forms 2 homohexamers on either side of HJ DNA bound by 1 or 2 RuvA tetramers; 4 subunits per hexamer contact DNA at a time. Coordinated motions by a converter formed by DNA-disengaged RuvB subunits stimulates ATP hydrolysis and nucleotide exchange. Immobilization of the converter enables RuvB to convert the ATP-contained energy into a lever motion, pulling 2 nucleotides of DNA out of the RuvA tetramer per ATP hydrolyzed, thus driving DNA branch migration. The RuvB motors rotate together with the DNA substrate, which together with the progressing nucleotide cycle form the mechanistic basis for DNA recombination by continuous HJ branch migration. Branch migration allows RuvC to scan DNA until it finds its consensus sequence, where it cleaves and resolves cruciform DNA. The sequence is that of Holliday junction branch migration complex subunit RuvB from Allorhizobium ampelinum (strain ATCC BAA-846 / DSM 112012 / S4) (Agrobacterium vitis (strain S4)).